The primary structure comprises 295 residues: WHI2-like protein P4H10.16c (295 aa).

It belongs to the WHI2 family.

Its subcellular location is the cytoplasm. It localises to the nucleus. The chain is WHI2-like protein P4H10.16c from Schizosaccharomyces pombe (strain 972 / ATCC 24843) (Fission yeast).